The chain runs to 142 residues: Large ribosomal subunit protein uL22c (142 aa).

It belongs to the universal ribosomal protein uL22 family. In terms of assembly, part of the 50S ribosomal subunit.

It localises to the plastid. Its subcellular location is the chloroplast. Its function is as follows. This protein binds specifically to 23S rRNA. The globular domain of the protein is located near the polypeptide exit tunnel on the outside of the subunit, while an extended beta-hairpin is found that lines the wall of the exit tunnel in the center of the 70S ribosome. The polypeptide is Large ribosomal subunit protein uL22c (rpl22) (Pinus koraiensis (Korean pine)).